We begin with the raw amino-acid sequence, 352 residues long: Uroporphyrinogen decarboxylase (352 aa).

Residues 26–30 (RQAGR), phenylalanine 45, aspartate 76, tyrosine 153, serine 208, and histidine 323 each bind substrate.

This sequence belongs to the uroporphyrinogen decarboxylase family. In terms of assembly, homodimer.

The protein localises to the cytoplasm. It catalyses the reaction uroporphyrinogen III + 4 H(+) = coproporphyrinogen III + 4 CO2. The protein operates within porphyrin-containing compound metabolism; protoporphyrin-IX biosynthesis; coproporphyrinogen-III from 5-aminolevulinate: step 4/4. Catalyzes the decarboxylation of four acetate groups of uroporphyrinogen-III to yield coproporphyrinogen-III. The protein is Uroporphyrinogen decarboxylase of Parasynechococcus marenigrum (strain WH8102).